Reading from the N-terminus, the 992-residue chain is RNA-binding protein 12 (992 aa).

Residues 304–379 enclose the RRM 1 domain; the sequence is LYVSVHGMPF…RYVEVSPATE (76 aa). Phosphoserine occurs at positions 352 and 375. The segment at 393–424 is disordered; it reads QSMGPSGQAHPPPQTLPRSKSPSGQKRSRSRS. Polar residues predominate over residues 408-417; sequence LPRSKSPSGQ. Residues Ser-420, Ser-422, and Ser-424 each carry the phosphoserine modification. Positions 430-507 constitute an RRM 2 domain; it reads FCVYLKGLPF…RFIQVHPITK (78 aa). At Ser-525 the chain carries Phosphoserine. Positions 849-913 are disordered; sequence FGGIPQNFGN…PGFGASSGKP (65 aa). Residues 876 to 887 are compositionally biased toward low complexity; sequence LGSVPGHLSGPP. Residues 916–992 form the RRM 3 domain; sequence TIIKVQNMPF…GSRKVKLVLG (77 aa).

It is found in the nucleus. The chain is RNA-binding protein 12 (Rbm12) from Mus musculus (Mouse).